The sequence spans 254 residues: Dolichol-phosphate mannosyltransferase subunit 1 (254 aa).

Residues P25, Y27, E29, V56, D58, D111, A112, D113, R140, and R227 each coordinate GDP-alpha-D-mannose. D113 is a binding site for Mg(2+). D113 contributes to the Mn(2+) binding site.

This sequence belongs to the glycosyltransferase 2 family. Component of the dolichol-phosphate mannose (DPM) synthase complex composed of dpm1, dpm2 and dpm3. Mg(2+) serves as cofactor. It depends on Mn(2+) as a cofactor. Requires Ca(2+) as cofactor.

The protein resides in the endoplasmic reticulum. It catalyses the reaction a di-trans,poly-cis-dolichyl phosphate + GDP-alpha-D-mannose = a di-trans,poly-cis-dolichyl beta-D-mannosyl phosphate + GDP. It participates in protein modification; protein glycosylation. Functionally, transfers mannose from GDP-mannose to dolichol monophosphate to form dolichol phosphate mannose (Dol-P-Man) which is the mannosyl donor in pathways leading to N-glycosylation, glycosyl phosphatidylinositol membrane anchoring, and O-mannosylation of proteins; catalytic subunit of the dolichol-phosphate mannose (DPM) synthase complex. This is Dolichol-phosphate mannosyltransferase subunit 1 (dpm1) from Dictyostelium discoideum (Social amoeba).